The following is a 391-amino-acid chain: 3-ketoacyl-CoA thiolase (391 aa).

Cys-95 (acyl-thioester intermediate) is an active-site residue. Residues His-347 and Cys-377 each act as proton acceptor in the active site.

This sequence belongs to the thiolase-like superfamily. Thiolase family. In terms of assembly, heterotetramer of two alpha chains (FadB) and two beta chains (FadA).

The protein localises to the cytoplasm. The enzyme catalyses an acyl-CoA + acetyl-CoA = a 3-oxoacyl-CoA + CoA. It participates in lipid metabolism; fatty acid beta-oxidation. Functionally, catalyzes the final step of fatty acid oxidation in which acetyl-CoA is released and the CoA ester of a fatty acid two carbons shorter is formed. The protein is 3-ketoacyl-CoA thiolase of Pseudomonas aeruginosa (strain UCBPP-PA14).